Consider the following 196-residue polypeptide: Holliday junction branch migration complex subunit RuvA (196 aa).

Positions 1 to 63 are domain I; sequence MINKIYGKII…EDEIKLFGFL (63 aa). The tract at residues 64–138 is domain II; the sequence is NVSEREVFEE…GKLVKADELT (75 aa). Position 138 (T138) is a region of interest, flexible linker. The segment at 139–196 is domain III; it reads SSVFKFKDLEQSIVNMGFDRKLVVAAIKEIMLIDEFLMLREVEQEQFLFRETLKRLSG.

The protein belongs to the RuvA family. Homotetramer. Forms an RuvA(8)-RuvB(12)-Holliday junction (HJ) complex. HJ DNA is sandwiched between 2 RuvA tetramers; dsDNA enters through RuvA and exits via RuvB. An RuvB hexamer assembles on each DNA strand where it exits the tetramer. Each RuvB hexamer is contacted by two RuvA subunits (via domain III) on 2 adjacent RuvB subunits; this complex drives branch migration. In the full resolvosome a probable DNA-RuvA(4)-RuvB(12)-RuvC(2) complex forms which resolves the HJ.

It localises to the cytoplasm. Its function is as follows. The RuvA-RuvB-RuvC complex processes Holliday junction (HJ) DNA during genetic recombination and DNA repair, while the RuvA-RuvB complex plays an important role in the rescue of blocked DNA replication forks via replication fork reversal (RFR). RuvA specifically binds to HJ cruciform DNA, conferring on it an open structure. The RuvB hexamer acts as an ATP-dependent pump, pulling dsDNA into and through the RuvAB complex. HJ branch migration allows RuvC to scan DNA until it finds its consensus sequence, where it cleaves and resolves the cruciform DNA. The chain is Holliday junction branch migration complex subunit RuvA from Borrelia hermsii (strain HS1 / DAH).